The following is a 596-amino-acid chain: Structural protein precursor VP8 (596 aa).

It is found in the virion. In terms of biological role, 120 subunits of the putative clamp protein VP8b appear to stabilize the capsid shell. This Oryza latifolia (Indian wild rice) protein is Structural protein precursor VP8.